Consider the following 548-residue polypeptide: (2S)-methylsuccinyl-CoA dehydrogenase (548 aa).

FAD-binding positions include 282–291 (AVFTEPNTGS) and 315–317 (WIT). Ser-291 is a binding site for substrate. Residue 409–412 (ESAR) participates in substrate binding. Residues Arg-437 and 505–509 (QIHGG) contribute to the FAD site. Catalysis depends on Glu-532, which acts as the Proton acceptor. 534–536 (AAE) is a binding site for FAD.

The protein belongs to the acyl-CoA dehydrogenase family. Homodimer. Requires FAD as cofactor.

The enzyme catalyses (2S)-methylsuccinyl-CoA + oxidized [electron-transfer flavoprotein] + H(+) = 2-methylfumaryl-CoA + reduced [electron-transfer flavoprotein]. Functionally, involved in the ethylmalonyl-CoA pathway, a new acetyl-CoA assimilation strategy that operates in a number of bacteria and replaces the glyoxylate cycle. Catalyzes the oxidation of (2S)-methylsuccinyl-CoA to yield mesaconyl-(C1)-CoA. Highly specific for (S)-methylsuccinyl-CoA. This chain is (2S)-methylsuccinyl-CoA dehydrogenase, found in Cereibacter sphaeroides (Rhodobacter sphaeroides).